A 401-amino-acid chain; its full sequence is Probable 2,3-bisphosphoglycerate-independent phosphoglycerate mutase (401 aa).

This sequence belongs to the BPG-independent phosphoglycerate mutase family. A-PGAM subfamily.

The catalysed reaction is (2R)-2-phosphoglycerate = (2R)-3-phosphoglycerate. Its pathway is carbohydrate degradation; glycolysis; pyruvate from D-glyceraldehyde 3-phosphate: step 3/5. In terms of biological role, catalyzes the interconversion of 2-phosphoglycerate and 3-phosphoglycerate. This chain is Probable 2,3-bisphosphoglycerate-independent phosphoglycerate mutase, found in Thermotoga maritima (strain ATCC 43589 / DSM 3109 / JCM 10099 / NBRC 100826 / MSB8).